The primary structure comprises 679 residues: DNA-directed RNA polymerase subunit beta' (679 aa).

Residues cysteine 69, cysteine 71, cysteine 87, and cysteine 90 each contribute to the Zn(2+) site. Aspartate 489, aspartate 491, and aspartate 493 together coordinate Mg(2+).

It belongs to the RNA polymerase beta' chain family. RpoC1 subfamily. As to quaternary structure, in plastids the minimal PEP RNA polymerase catalytic core is composed of four subunits: alpha, beta, beta', and beta''. When a (nuclear-encoded) sigma factor is associated with the core the holoenzyme is formed, which can initiate transcription. Requires Mg(2+) as cofactor. Zn(2+) serves as cofactor.

It is found in the plastid. The protein localises to the chloroplast. It catalyses the reaction RNA(n) + a ribonucleoside 5'-triphosphate = RNA(n+1) + diphosphate. Functionally, DNA-dependent RNA polymerase catalyzes the transcription of DNA into RNA using the four ribonucleoside triphosphates as substrates. The protein is DNA-directed RNA polymerase subunit beta' of Phalaenopsis aphrodite subsp. formosana (Moth orchid).